The chain runs to 274 residues: NH(3)-dependent NAD(+) synthetase (274 aa).

ATP is bound at residue 46–53; the sequence is GISGGQDS. Residue D52 coordinates Mg(2+). Deamido-NAD(+) is bound at residue R140. Residue T160 participates in ATP binding. Position 165 (E165) interacts with Mg(2+). Positions 173 and 180 each coordinate deamido-NAD(+). K189 and T211 together coordinate ATP. 260–261 is a deamido-NAD(+) binding site; the sequence is HK.

Belongs to the NAD synthetase family. As to quaternary structure, homodimer.

It carries out the reaction deamido-NAD(+) + NH4(+) + ATP = AMP + diphosphate + NAD(+) + H(+). Its pathway is cofactor biosynthesis; NAD(+) biosynthesis; NAD(+) from deamido-NAD(+) (ammonia route): step 1/1. Functionally, catalyzes the ATP-dependent amidation of deamido-NAD to form NAD. Uses ammonia as a nitrogen source. This chain is NH(3)-dependent NAD(+) synthetase, found in Lysinibacillus sphaericus (strain C3-41).